The following is a 430-amino-acid chain: MPQLKVLINGGGIAGNAIAFWLTKLGHDVTVLERFPALRTTGLQLDLRGHGIEVLKRMGLDDAMKAKVIKEDGAQFVDTNGKVVAYFPAVDTSKGGVQAFTSEYEIMRGDICRVFYAATKDRATYKFGTSVESFEDLGDSIKVQLTDHTVDHYDLLIGADGVTSSIRKMMLGPGVPDKFIQFQNLYASYFTIPAPIKPDEKYMANIFIAPGSKLLMTRRDNPERLQVYMGGKAPGARLENARRGDTAEEKLGIEEFMQGCGWRTSEMIDELRKADDFYLERLGMVKLDSWHRGRVALVGEAAWCSSVLTGMGTTSCLVGAYCLAGEIAKHCGRGDQGEAKDDPMMVQKNLANALAGYEEKFMPFMHQVQDGLSAKTGTRTYMPSSQWGVTILNWVIKIIALLRLNMAGDWVIREAVRNWKLPDYPELLKE.

Residues 11–14 (GGIA), 33–34 (ER), Arg-108, and Tyr-278 each bind FAD.

Belongs to the aromatic-ring hydroxylase family. FAD serves as cofactor.

It participates in secondary metabolite biosynthesis; terpenoid biosynthesis. Its function is as follows. Flavin-dependent monooxygenase; part of the gene cluster that mediates the biosynthesis of xenovulene A, an unusual meroterpenoid that has potent inhibitory effects on the human gamma-aminobutyrate A (GABAA) benzodiazepine receptor. The first step of xenovulene A biosynthesis is the biosynthesis of 3-methylorcinaldehyde performed by the non-reducing polyketide synthase aspks1. The salicylate hydroxylase asL1 then catalyzes the oxidative dearomatization of 3-methylorcinaldehyde to yield a dearomatized hydroxycyclohexadione. The 2-oxoglutarate-dependent dioxygenase asL3 further catalyzes the oxidative ring expansion to provide the first tropolone metabolite. The cytochrome P450 monooxygenase asR2 allows the synthesis of tropolone hemiacetal. In parallel, a previously unrecognised class of terpene cyclase, asR6, produces alpha-humulene from farnesylpyrophosphate (FPP). The putative Diels-Alderase asR5 probably catalyzes the formation of the tropolone-humulene skeleton by linking humulene and the polyketide moiety. Oxidative-ring contractions catalyzed by asL4 and asL6 then processively remove carbon atoms from the polyketide to yield xenovulene A. This is FAD-dependent monooxygenase asL4 from Sarocladium schorii (Acremonium strictum (strain IMI 501407)).